The chain runs to 278 residues: MINEILDKVGRLLEEVRTKKPLVHSITNYITATDCANVILAVGGSPTMADYVKEVEEIASISSAVVLNMGVISEKMVEAMILAGKSANKNNVPVIFDPVGAGVANFRNKSAEKILSEVKVDIIRGNISEIKFICGLRSETKGVDASERDMNMGNDKKVIVAQELAKKLNCVVAITGVDDIISDGKRNVILSNGHKMLANVTGTGCMSSALCGAFAGASDDYFIAAICAVLTMSISGEIAYEKSKGIGMGTFHISLIDAISMMNENVIKEKARVTTINR.

Met48 lines the substrate pocket. Positions 124 and 175 each coordinate ATP. Residue Gly202 participates in substrate binding.

It belongs to the Thz kinase family. Mg(2+) is required as a cofactor.

It carries out the reaction 5-(2-hydroxyethyl)-4-methylthiazole + ATP = 4-methyl-5-(2-phosphooxyethyl)-thiazole + ADP + H(+). The protein operates within cofactor biosynthesis; thiamine diphosphate biosynthesis; 4-methyl-5-(2-phosphoethyl)-thiazole from 5-(2-hydroxyethyl)-4-methylthiazole: step 1/1. Catalyzes the phosphorylation of the hydroxyl group of 4-methyl-5-beta-hydroxyethylthiazole (THZ). This chain is Hydroxyethylthiazole kinase, found in Clostridium botulinum (strain Alaska E43 / Type E3).